The following is a 436-amino-acid chain: Trigger factor (436 aa).

The PPIase FKBP-type domain maps to 161–246 (DDRVTVDFVG…VNKVEGLSLP (86 aa)).

The protein belongs to the FKBP-type PPIase family. Tig subfamily.

It is found in the cytoplasm. It carries out the reaction [protein]-peptidylproline (omega=180) = [protein]-peptidylproline (omega=0). Functionally, involved in protein export. Acts as a chaperone by maintaining the newly synthesized protein in an open conformation. Functions as a peptidyl-prolyl cis-trans isomerase. The sequence is that of Trigger factor from Pseudoalteromonas atlantica (strain T6c / ATCC BAA-1087).